The following is a 297-amino-acid chain: Homoserine kinase (297 aa).

85 to 95 (PPTRGMGSSSA) is an ATP binding site.

Belongs to the GHMP kinase family. Homoserine kinase subfamily.

The protein localises to the cytoplasm. It catalyses the reaction L-homoserine + ATP = O-phospho-L-homoserine + ADP + H(+). Its pathway is amino-acid biosynthesis; L-threonine biosynthesis; L-threonine from L-aspartate: step 4/5. Functionally, catalyzes the ATP-dependent phosphorylation of L-homoserine to L-homoserine phosphate. The protein is Homoserine kinase of Desulfitobacterium hafniense (strain DSM 10664 / DCB-2).